Here is a 354-residue protein sequence, read N- to C-terminus: uncharacterized protein (354 aa).

Residues 48–285 enclose the ABC transporter domain; that stretch reads VETWEISKIY…DEGYEVVLKG (238 aa). 87-94 provides a ligand contact to ATP; the sequence is GPNGAGKT.

The protein belongs to the ABC transporter superfamily.

This is an uncharacterized protein from Synechocystis sp. (strain ATCC 27184 / PCC 6803 / Kazusa).